The chain runs to 357 residues: Putative DENN domain-containing protein 10 B (357 aa).

The uDENN domain occupies 1 to 140 (MAAAELADTQ…TKGICQSEEN (140 aa)). In terms of domain architecture, cDENN spans 159–299 (IKDIVSQFGM…PEKSESQVIQ (141 aa)). The dDENN domain maps to 301 to 357 (IALKTREIFTNLAPFSEVSADGEKRVLNLEALKQKRFPPATENFLYHLAAAEQMLKI).

Belongs to the DENND10 family.

It localises to the late endosome. May be a guanine nucleotide exchange factor (GEF). The chain is Putative DENN domain-containing protein 10 B from Homo sapiens (Human).